A 543-amino-acid chain; its full sequence is Chaperonin GroEL 2 (543 aa).

Residues 29-32 (TLGP), 86-90 (DGTTT), Gly413, 479-481 (NAA), and Asp495 each bind ATP.

Belongs to the chaperonin (HSP60) family. As to quaternary structure, forms a cylinder of 14 subunits composed of two heptameric rings stacked back-to-back. Interacts with the co-chaperonin GroES.

It is found in the cytoplasm. The enzyme catalyses ATP + H2O + a folded polypeptide = ADP + phosphate + an unfolded polypeptide.. Functionally, together with its co-chaperonin GroES, plays an essential role in assisting protein folding. The GroEL-GroES system forms a nano-cage that allows encapsulation of the non-native substrate proteins and provides a physical environment optimized to promote and accelerate protein folding. The protein is Chaperonin GroEL 2 of Prochlorococcus marinus (strain NATL1A).